The primary structure comprises 52 residues: Venom peptide 4a (52 aa).

The first 23 residues, 1 to 23 (MRSAILLVIVAIVAILGFLGVNA), serve as a signal peptide directing secretion. 3 AXPX repeats span residues 23–26 (AEPL), 31–34 (AEPN), and 39–42 (AAPL). A propeptide spanning residues 24 to 41 (EPLPSPLAEPNPHAKAAP) is cleaved from the precursor. Alanine amide is present on Ala-51.

In terms of tissue distribution, expressed by the venom gland.

The protein localises to the secreted. The chain is Venom peptide 4a from Eumenes pomiformis (Potter wasp).